Consider the following 382-residue polypeptide: Proton extrusion protein PxcA (382 aa).

Helical transmembrane passes span 156 to 176, 257 to 277, 305 to 325, and 340 to 360; these read TLIS…VQQI, AIKN…VCII, IILF…QVLL, and FILL…KYWI.

The protein belongs to the CemA family.

It is found in the cell inner membrane. Its function is as follows. Required for H(+) efflux immediately after light irradiation to form a rapid H(+) concentration gradient across the thylakoid membranes. Together with PxcL, contributes to transient H(+) uptake following dark to light transition. The chain is Proton extrusion protein PxcA from Prochlorococcus marinus (strain MIT 9313).